A 270-amino-acid polypeptide reads, in one-letter code: Orotidine 5'-phosphate decarboxylase (270 aa).

Catalysis depends on Lys-95, which acts as the Proton donor.

The protein belongs to the OMP decarboxylase family. Type 2 subfamily.

The catalysed reaction is orotidine 5'-phosphate + H(+) = UMP + CO2. It participates in pyrimidine metabolism; UMP biosynthesis via de novo pathway; UMP from orotate: step 2/2. The protein is Orotidine 5'-phosphate decarboxylase of Dechloromonas aromatica (strain RCB).